The following is a 512-amino-acid chain: Cytochrome P450 26B1 (512 aa).

Cys-441 contacts heme.

It belongs to the cytochrome P450 family. Requires heme as cofactor.

Its subcellular location is the endoplasmic reticulum membrane. The protein resides in the microsome membrane. The catalysed reaction is all-trans-retinoate + reduced [NADPH--hemoprotein reductase] + O2 = all-trans-4-hydroxyretinoate + oxidized [NADPH--hemoprotein reductase] + H2O + H(+). It carries out the reaction all-trans-retinoate + reduced [NADPH--hemoprotein reductase] + O2 = all-trans-18-hydroxyretinoate + oxidized [NADPH--hemoprotein reductase] + H2O + H(+). Its function is as follows. A cytochrome P450 monooxygenase involved in the metabolism of retinoates (RAs), the active metabolites of vitamin A, and critical signaling molecules in animals. RAs exist as at least four different isomers: all-trans-RA (atRA), 9-cis-RA, 13-cis-RA, and 9,13-dicis-RA, where atRA is considered to be the biologically active isomer, although 9-cis-RA and 13-cis-RA also have activity. Catalyzes the hydroxylation of atRA primarily at C-4 and C-18, thereby contributing to the regulation of atRA homeostasis and signaling. Hydroxylation of atRA limits its biological activity and initiates a degradative process leading to its eventual elimination. Involved in the convertion of atRA to all-trans-4-oxo-RA. Can oxidize all-trans-13,14-dihydroretinoate (DRA) to metabolites which could include all-trans-4-oxo-DRA, all-trans-4-hydroxy-DRA, all-trans-5,8-epoxy-DRA, and all-trans-18-hydroxy-DRA. Shows preference for the following substrates: atRA &gt; 9-cis-RA &gt; 13-cis-RA. Plays a central role in germ cell development: acts by degrading RAs in the developing testis, preventing STRA8 expression, thereby leading to delay of meiosis. Required for the maintenance of the undifferentiated state of male germ cells during embryonic development in Sertoli cells, inducing arrest in G0 phase of the cell cycle and preventing meiotic entry. Plays a role in skeletal development, both at the level of patterning and in the ossification of bone and the establishment of some synovial joints. Essential for postnatal survival. Also has a significant activity in oxidation of tazarotenic acid and may therefore metabolize that xenobiotic in vivo. The protein is Cytochrome P450 26B1 (Cyp26b1) of Rattus norvegicus (Rat).